Consider the following 73-residue polypeptide: uncharacterized protein (73 aa).

This sequence belongs to the asfivirus I73R family.

It is found in the virion. This is an uncharacterized protein from Ornithodoros (relapsing fever ticks).